We begin with the raw amino-acid sequence, 69 residues long: DNA gyrase inhibitor YacG (69 aa).

Cysteine 13, cysteine 16, cysteine 32, and cysteine 36 together coordinate Zn(2+).

The protein belongs to the DNA gyrase inhibitor YacG family. Interacts with GyrB. Zn(2+) serves as cofactor.

In terms of biological role, inhibits all the catalytic activities of DNA gyrase by preventing its interaction with DNA. Acts by binding directly to the C-terminal domain of GyrB, which probably disrupts DNA binding by the gyrase. This Neisseria meningitidis serogroup B (strain ATCC BAA-335 / MC58) protein is DNA gyrase inhibitor YacG.